A 972-amino-acid polypeptide reads, in one-letter code: SWI/SNF-related matrix-associated actin-dependent regulator of chromatin subfamily A containing DEAD/H box 1A (972 aa).

Disordered regions lie at residues 15–76 (NAVG…SDLQ), 125–177 (DEDS…EKQE), and 217–333 (SSTD…EDSI). Basic and acidic residues-rich tracts occupy residues 22–42 (KSPD…RKAD) and 63–72 (EVVRMGKDSA). The CUE 1 domain maps to 82–127 (DMEDKIIKLLEIFPQKSKKDLLEVIENTSTLDGAVAHCLMIYGDED). Residues 128–138 (SGGRKDKGGRS) show a composition bias toward basic and acidic residues. The segment covering 156 to 169 (SESEDEDSEDEESE) has biased composition (acidic residues). Residues 175-218 (KQEALLKKLKRKLPDIEKEVLRDILKEHDWDYENALGSLLVFSS) enclose the CUE 2 domain. Over residues 237-246 (HSKEKTDKIT) the composition is skewed to basic and acidic residues. Residues 247 to 263 (QRPSGSSSLSRWLTAAS) are compositionally biased toward polar residues. Low complexity predominate over residues 279-290 (KSALSKSTSKNS). Residues 307–332 (ASEDEDEIDSDVDSMSDDQDSEDEDS) are compositionally biased toward acidic residues. In terms of domain architecture, Helicase ATP-binding spans 460–628 (ILLHQHKLSG…MSLLNFIMPS (169 aa)). 473–480 (DEMGLGKT) serves as a coordination point for ATP. A DEGH box motif is present at residues 579–582 (DEGH). A Helicase C-terminal domain is found at 805–966 (LLTKTLAKLK…AITEQMAELL (162 aa)).

The protein belongs to the SNF2/RAD54 helicase family.

The protein resides in the nucleus. The protein localises to the chromosome. It carries out the reaction ATP + H2O = ADP + phosphate + H(+). Functionally, DNA helicase that possesses intrinsic ATP-dependent nucleosome-remodeling activity and is both required for DNA repair and heterochromatin organization. Promotes DNA end resection of double-strand breaks (DSBs) following DNA damage: probably acts by weakening histone DNA interactions in nucleosomes flanking DSBs. Required for the restoration of heterochromatin organization after replication. The sequence is that of SWI/SNF-related matrix-associated actin-dependent regulator of chromatin subfamily A containing DEAD/H box 1A (smarcad1a) from Danio rerio (Zebrafish).